We begin with the raw amino-acid sequence, 808 residues long: Anaphase-promoting complex subunit 4 (808 aa).

Tyr-469 carries the post-translational modification Phosphotyrosine. A phosphoserine mark is found at Ser-757 and Ser-758. Lys-772 is covalently cross-linked (Glycyl lysine isopeptide (Lys-Gly) (interchain with G-Cter in SUMO2)). 2 positions are modified to phosphoserine: Ser-777 and Ser-779. Lys-798 is covalently cross-linked (Glycyl lysine isopeptide (Lys-Gly) (interchain with G-Cter in SUMO2)).

It belongs to the APC4 family. In terms of assembly, the mammalian APC/C is composed at least of 14 distinct subunits ANAPC1, ANAPC2, CDC27/APC3, ANAPC4, ANAPC5, CDC16/APC6, ANAPC7, CDC23/APC8, ANAPC10, ANAPC11, CDC26/APC12, ANAPC13, ANAPC15 and ANAPC16 that assemble into a complex of at least 19 chains with a combined molecular mass of around 1.2 MDa; APC/C interacts with FZR1 and FBXO5. In the context of the APC/C complex, directly interacts with UBE2S. Interacts with FBXO43.

Its subcellular location is the nucleus. It functions in the pathway protein modification; protein ubiquitination. In terms of biological role, component of the anaphase promoting complex/cyclosome (APC/C), a cell cycle-regulated E3 ubiquitin ligase that controls progression through mitosis and the G1 phase of the cell cycle. The APC/C complex acts by mediating ubiquitination and subsequent degradation of target proteins: it mainly mediates the formation of 'Lys-11'-linked polyubiquitin chains and, to a lower extent, the formation of 'Lys-48'- and 'Lys-63'-linked polyubiquitin chains. The APC/C complex catalyzes assembly of branched 'Lys-11'-/'Lys-48'-linked branched ubiquitin chains on target proteins. This chain is Anaphase-promoting complex subunit 4 (ANAPC4), found in Homo sapiens (Human).